Reading from the N-terminus, the 476-residue chain is Ataxin-10 (476 aa).

Position 10 is an omega-N-methylarginine (R10). 2 positions are modified to phosphoserine: S13 and S78. A Phosphothreonine modification is found at T83. The residue at position 431 (S431) is a Phosphoserine.

This sequence belongs to the ataxin-10 family. As to quaternary structure, homooligomer. Interacts with GNB2. Interacts with IQCB1. Interacts with OGT. Polyubiquitinated. Post-translationally, phosphorylation at Ser-13 by AURKB promotes the association of ATXN10 with PLK1. Phosphorylation at Ser-78 and Thr-83 by PLK1 may play a role in the regulation of cytokinesis and may stimulate the proteasome-mediated degradation of ATXN10.

It is found in the cytoplasm. Its subcellular location is the perinuclear region. It localises to the midbody. The protein resides in the cytoskeleton. The protein localises to the cilium basal body. It is found in the microtubule organizing center. Its subcellular location is the centrosome. It localises to the centriole. Functionally, may play a role in the regulation of cytokinesis. May play a role in signaling by stimulating protein glycosylation. Induces neuritogenesis by activating the Ras-MAP kinase pathway and is necessary for the survival of cerebellar neurons. Does not appear to play a major role in ciliogenesis. The chain is Ataxin-10 (ATXN10) from Pongo abelii (Sumatran orangutan).